We begin with the raw amino-acid sequence, 565 residues long: Acyl-CoA ligase easD (565 aa).

Residues 213-221 (TSGTSGKQK), 354-359 (HAYGLT), D438, R457, and K555 each bind ATP. Residues 284-354 (DMQLMLKTIE…KLRPTWKINH (71 aa)) are SBD1. The tract at residues 355-417 (AYGLTETGVV…FNSPSCFLGY (63 aa)) is SBD2.

It belongs to the ATP-dependent AMP-binding enzyme family.

The protein operates within antibiotic biosynthesis. Its function is as follows. Acyl-CoA ligase; part of the gene cluster that mediates the biosynthesis of emericellamides, secondary metabolites acting as antibiotics. The biosynthesis of emericellamides initiates from the highly reducing polyketide synthase easB which catalyzes the formation of the linear polyketide chain. EasB produces several polyketides that can be further processed by the downstream enzymes. The polyketides are released from easB as linear polyketide carboxylic acids, which are converted to CoA thioesters by the acyl-CoA ligase easD. The substrates are then loaded onto the acyltransferase easC, which shuttles them to the first thiolation (T) domain of the nonribosomal peptide synthetase easA. EasA then performs condensation of the polyketides with one glycine, two alanine, one valine and one leucine residues. A last step of cyclization leads to the production of emericellamides. In Emericella nidulans (strain FGSC A4 / ATCC 38163 / CBS 112.46 / NRRL 194 / M139) (Aspergillus nidulans), this protein is Acyl-CoA ligase easD.